A 562-amino-acid polypeptide reads, in one-letter code: Efflux pump apf11 (562 aa).

2 stretches are compositionally biased toward low complexity: residues 1-10 (MGDISAATKA) and 18-30 (TPET…SSDT). Positions 1–36 (MGDISAATKAPAPPTPATPETNTTSSSSDTDVQHEP) are disordered. Asn-22 carries N-linked (GlcNAc...) asparagine glycosylation. 8 consecutive transmembrane segments (helical) span residues 46–66 (LVIF…TIVA), 83–103 (AWYG…FGKI), 110–130 (KLVF…CALA), 141–161 (AIAG…TALT), 169–189 (VYTA…PIIG), 200–220 (WCFW…VFCL), 249–269 (GGLA…WGGT), and 278–298 (IIVL…HQHW). N-linked (GlcNAc...) asparagine glycosylation occurs at Asn-312. 6 consecutive transmembrane segments (helical) span residues 317–337 (MFLL…YYLP), 356–376 (LAMV…AGAV), 382–404 (FVFF…HPSI), 414–434 (ILFG…VQVA), 447–467 (VMLV…TLFL), and 516–536 (FLIG…IRWI).

This sequence belongs to the major facilitator superfamily. TCR/Tet family.

The protein resides in the membrane. The protein operates within secondary metabolite biosynthesis. In terms of biological role, efflux pump; part of the gene cluster that mediates the biosynthesis of the cyclic tetrapeptide apicidin F (APF). The sequence is that of Efflux pump apf11 (apf11) from Gibberella fujikuroi (strain CBS 195.34 / IMI 58289 / NRRL A-6831) (Bakanae and foot rot disease fungus).